We begin with the raw amino-acid sequence, 1549 residues long: Trichohyalin (1549 aa).

Positions 1-91 (MSPLLRSIFN…AAACYYALGQ (91 aa)) are S-100-like. EF-hand domains lie at 23–48 (CDGT…LRKP) and 49–84 (HDPE…VAAA). Threonine 27, aspartate 32, aspartate 62, aspartate 64, aspartate 66, and glutamate 73 together coordinate Ca(2+). Disordered regions lie at residues 97–125 (EKEA…PQDR), 157–180 (LQRR…GREL), 262–359 (LRRK…KQEQ), and 404–448 (QREK…RQER). Basic and acidic residues-rich tracts occupy residues 171–180 (LQQRPKGREL), 262–278 (LRRK…RQEQ), and 317–335 (HRQE…ERQQ). Low complexity predominate over residues 336–348 (EQQISEEVQSLQE). Residues 349–359 (DQGRQRLKQEQ) are compositionally biased toward basic and acidic residues. A run of 14 repeats spans residues 413 to 448 (ERQY…RQER), 449 to 476 (EKQY…RQER), 477 to 504 (EKQY…RQER), 505 to 532 (ERQY…RQER), 533 to 560 (ERQY…RQER), 561 to 588 (EKQY…RQER), 589 to 616 (EKQY…RQER), 617 to 644 (ERQY…RQER), 645 to 678 (ERQY…RQER), 679 to 706 (ERQY…RQER), 707 to 742 (ERQY…RQVR), 743 to 771 (ERKY…DREK), 772 to 796 (RQYL…RQER), and 797 to 832 (ERQY…RQEL). The tract at residues 413-832 (ERQYREVELQ…ECEKRRRQEL (420 aa)) is 14 X 28 AA approximate tandem repeats. Disordered regions lie at residues 782–803 (REEE…YREE), 839–942 (EELQ…RKFR), and 980–1000 (QLRQ…ERDR). Basic and acidic residues-rich tracts occupy residues 850–884 (FRDD…DSWV), 895–918 (PLQD…KRDS), and 925–942 (LLER…RKFR). 23 tandem repeats follow at residues 938–961 (DRKF…YLEE), 962–985 (DRKF…RQER), 986–1021 (DRKF…RQER), 1022–1044 (DRKF…RQER), 1045–1067 (DRKF…RQER), 1068–1090 (DRKF…LRQE), 1091–1121 (RNRK…RQKR), 1122–1144 (DRKF…RQER), 1145–1167 (DRKF…RQER), 1168–1197 (DRKF…RQER), 1198–1227 (DRKF…RQER), 1228–1250 (DRKF…RQER), 1251–1273 (DRKF…RQER), 1274–1296 (DRKF…RQER), 1297–1319 (DRKF…RQER), 1320–1342 (DRKF…RQER), 1343–1368 (DRKF…ELEG), 1369–1391 (VFSQ…QRQR), 1392–1416 (DRKF…VQEQ), 1417–1439 (DRKF…RRRQ), 1440–1461 (QLDQ…RRQE), 1462–1484 (QELR…EEEQ), and 1485–1507 (LRRQ…SRRQ). A 23 X 23 AA approximate tandem repeats region spans residues 938–1507 (DRKFREEEQL…ERDVQQSRRQ (570 aa)). Positions 1489-1523 (QQEEQKRRQERDVQQSRRQVWEEDKGRRQVLEAGK) are enriched in basic and acidic residues. The disordered stretch occupies residues 1489 to 1549 (QQEEQKRRQE…IQEQRSQYRP (61 aa)).

Belongs to the S100-fused protein family. Homodimer. In terms of processing, substrate of transglutaminase. Some 200 arginines are probably converted to citrullines by peptidylarginine deimidase. As to expression, found in the hard keratinizing tissues such as the inner root sheath (IRS) of hair follicles and medulla, and in the epithelia of the tongue, hoof and rumen.

Its function is as follows. Intermediate filament-associated protein that associates in regular arrays with keratin intermediate filaments (KIF) of the inner root sheath cells of the hair follicle and the granular layer of the epidermis. It later becomes cross-linked to KIF by isodipeptide bonds. It may serve as scaffold protein, together with involucrin, in the organization of the cell envelope or even anchor the cell envelope to the KIF network. It may be involved in its own calcium-dependent postsynthetic processing during terminal differentiation. The chain is Trichohyalin (TCHH) from Ovis aries (Sheep).